A 734-amino-acid chain; its full sequence is Photosystem I P700 chlorophyll a apoprotein A2 (734 aa).

A run of 8 helical transmembrane segments spans residues 46-69 (IFAS…FHVA), 135-158 (LYAG…LHLQ), 175-199 (LNHH…HVAI), 273-291 (IAHH…GHMY), 330-353 (LHFQ…QHLY), 369-395 (AALY…IFFV), 417-439 (AIIS…LYVH), and 517-535 (FLVH…LILV). [4Fe-4S] cluster contacts are provided by C559 and C568. Transmembrane regions (helical) follow at residues 575–596 (AFYL…YWHW) and 643–665 (LSVW…MFLI). 3 residues coordinate chlorophyll a: H654, M662, and Y670. W671 contacts phylloquinone. The helical transmembrane segment at 707–727 (LVGLVHFSVGYVLTYAAFVIA) threads the bilayer.

The protein belongs to the PsaA/PsaB family. The PsaA/B heterodimer binds the P700 chlorophyll special pair and subsequent electron acceptors. PSI consists of a core antenna complex that captures photons, and an electron transfer chain that converts photonic excitation into a charge separation. The eukaryotic PSI reaction center is composed of at least 11 subunits. P700 is a chlorophyll a/chlorophyll a' dimer, A0 is one or more chlorophyll a, A1 is one or both phylloquinones and FX is a shared 4Fe-4S iron-sulfur center. is required as a cofactor.

The protein resides in the plastid. It localises to the chloroplast thylakoid membrane. The catalysed reaction is reduced [plastocyanin] + hnu + oxidized [2Fe-2S]-[ferredoxin] = oxidized [plastocyanin] + reduced [2Fe-2S]-[ferredoxin]. Functionally, psaA and PsaB bind P700, the primary electron donor of photosystem I (PSI), as well as the electron acceptors A0, A1 and FX. PSI is a plastocyanin/cytochrome c6-ferredoxin oxidoreductase, converting photonic excitation into a charge separation, which transfers an electron from the donor P700 chlorophyll pair to the spectroscopically characterized acceptors A0, A1, FX, FA and FB in turn. Oxidized P700 is reduced on the lumenal side of the thylakoid membrane by plastocyanin or cytochrome c6. The polypeptide is Photosystem I P700 chlorophyll a apoprotein A2 (Cyanidium caldarium (Red alga)).